The chain runs to 153 residues: Pheromone-binding protein Gp-9 (153 aa).

An N-terminal signal peptide occupies residues 1–19 (MKTLILHICIFALVAFASA). Disulfide bonds link C37–C77, C73–C129, and C118–C138.

It belongs to the PBP/GOBP family. In terms of assembly, homodimer.

It localises to the secreted. In terms of biological role, colony queen number, a major feature of social organization, is associated with worker genotype for Gp-9. Colonies are headed by either a single reproductive queen (monogyne form) or multiple queens (polygyne form). Differences in worker Gp-9 genotypes between social forms may cause differences in workers' abilities to recognize queens and regulate their numbers. The chain is Pheromone-binding protein Gp-9 from Solenopsis nigella gensterblumi (Fire ant).